Consider the following 498-residue polypeptide: ATP synthase subunit beta, chloroplastic (498 aa).

Position 172–179 (172–179 (GGAGVGKT)) interacts with ATP.

Belongs to the ATPase alpha/beta chains family. As to quaternary structure, F-type ATPases have 2 components, CF(1) - the catalytic core - and CF(0) - the membrane proton channel. CF(1) has five subunits: alpha(3), beta(3), gamma(1), delta(1), epsilon(1). CF(0) has four main subunits: a(1), b(1), b'(1) and c(9-12).

Its subcellular location is the plastid. The protein resides in the chloroplast thylakoid membrane. The catalysed reaction is ATP + H2O + 4 H(+)(in) = ADP + phosphate + 5 H(+)(out). In terms of biological role, produces ATP from ADP in the presence of a proton gradient across the membrane. The catalytic sites are hosted primarily by the beta subunits. The sequence is that of ATP synthase subunit beta, chloroplastic from Agapanthus africanus (Lily of the Nile).